A 221-amino-acid polypeptide reads, in one-letter code: Leucyl/phenylalanyl-tRNA--protein transferase (221 aa).

The protein belongs to the L/F-transferase family.

It is found in the cytoplasm. The enzyme catalyses N-terminal L-lysyl-[protein] + L-leucyl-tRNA(Leu) = N-terminal L-leucyl-L-lysyl-[protein] + tRNA(Leu) + H(+). The catalysed reaction is N-terminal L-arginyl-[protein] + L-leucyl-tRNA(Leu) = N-terminal L-leucyl-L-arginyl-[protein] + tRNA(Leu) + H(+). It catalyses the reaction L-phenylalanyl-tRNA(Phe) + an N-terminal L-alpha-aminoacyl-[protein] = an N-terminal L-phenylalanyl-L-alpha-aminoacyl-[protein] + tRNA(Phe). In terms of biological role, functions in the N-end rule pathway of protein degradation where it conjugates Leu, Phe and, less efficiently, Met from aminoacyl-tRNAs to the N-termini of proteins containing an N-terminal arginine or lysine. The protein is Leucyl/phenylalanyl-tRNA--protein transferase of Phenylobacterium zucineum (strain HLK1).